The primary structure comprises 520 residues: DNA-(apurinic or apyrimidinic site) endonuclease 2 (520 aa).

Mg(2+) is bound at residue glutamate 59. The active site involves tyrosine 181. Aspartate 222, asparagine 224, and aspartate 353 together coordinate Mg(2+). Aspartate 222 functions as the Proton donor/acceptor in the catalytic mechanism. Zn(2+) is bound by residues cysteine 476, histidine 478, cysteine 500, and cysteine 514. A GRF-type zinc finger spans residues 476-520 (CRHGEESMLKTSKTSANPGRKFWICKRSRGDSNNTESSCGFFQWV).

This sequence belongs to the DNA repair enzymes AP/ExoA family. Mg(2+) is required as a cofactor. It depends on Mn(2+) as a cofactor.

Its subcellular location is the nucleus. It catalyses the reaction Exonucleolytic cleavage in the 3'- to 5'-direction to yield nucleoside 5'-phosphates.. Functionally, DNA repair enzyme that cleaves apurinic/apyrimidinic (AP) sites and removes 3'-blocking groups present at single strand breaks of damaged DNA. The sequence is that of DNA-(apurinic or apyrimidinic site) endonuclease 2 (APN2) from Saccharomyces cerevisiae (strain ATCC 204508 / S288c) (Baker's yeast).